The sequence spans 201 residues: Small ribosomal subunit protein uS4c (201 aa).

The interval 15–43 (LGALPGLTNKRPRAGSDLRNQSRSGKKSQ) is disordered. The S4 RNA-binding domain maps to 89 to 152 (MRLDNILFRL…NSRTLIQNSL (64 aa)).

It belongs to the universal ribosomal protein uS4 family. Part of the 30S ribosomal subunit. Contacts protein S5. The interaction surface between S4 and S5 is involved in control of translational fidelity.

Its subcellular location is the plastid. It localises to the chloroplast. Functionally, one of the primary rRNA binding proteins, it binds directly to 16S rRNA where it nucleates assembly of the body of the 30S subunit. In terms of biological role, with S5 and S12 plays an important role in translational accuracy. The protein is Small ribosomal subunit protein uS4c (rps4) of Panax ginseng (Korean ginseng).